The chain runs to 243 residues: MTLEILYQDPYLIAVNKPAGMLVHRSWLDRHETQFVMQTLRDQIGQHVYPIHRLDRPTSGVLLFALSSEVANLLCLQFENKQVQKSYLAIVRGYLVGEGRIDYPLKVQLDKIADKFAQDDKAPQEAVTDYLGLAKVEMPYCVKKYPTTRYSLVRLIPHTGRKHQLRRHMKHLFHPILGDTQYGDLHQNRALTTHTGVQRLMLHAERLIFTHPITQQQITICAGVDQQWLDLINIFDWDLNSIH.

Asp55 is a catalytic residue.

Belongs to the pseudouridine synthase RluA family.

The enzyme catalyses uridine(65) in tRNA = pseudouridine(65) in tRNA. Responsible for synthesis of pseudouridine from uracil-65 in transfer RNAs. The protein is tRNA pseudouridine synthase C (truC) of Pasteurella multocida (strain Pm70).